Consider the following 503-residue polypeptide: Aromatase (503 aa).

The next 2 helical transmembrane spans lie at 19–39 and 53–73; these read EVVP…LLVW and FLGI…IGSA. Residues aspartate 309 and methionine 374 each contribute to the substrate site. Heme is bound at residue cysteine 437.

The protein belongs to the cytochrome P450 family. Heme is required as a cofactor.

It localises to the endoplasmic reticulum membrane. The protein resides in the microsome membrane. The enzyme catalyses testosterone + 3 reduced [NADPH--hemoprotein reductase] + 3 O2 = 17beta-estradiol + formate + 3 oxidized [NADPH--hemoprotein reductase] + 4 H2O + 4 H(+). It carries out the reaction androst-4-ene-3,17-dione + 3 reduced [NADPH--hemoprotein reductase] + 3 O2 = estrone + formate + 3 oxidized [NADPH--hemoprotein reductase] + 4 H2O + 4 H(+). It catalyses the reaction androst-4-ene-3,17-dione + reduced [NADPH--hemoprotein reductase] + O2 = 19-hydroxyandrost-4-ene-3,17-dione + oxidized [NADPH--hemoprotein reductase] + H2O + H(+). The catalysed reaction is 19-hydroxyandrost-4-ene-3,17-dione + reduced [NADPH--hemoprotein reductase] + O2 = 19-oxo-androst-4-ene-3,17-dione + oxidized [NADPH--hemoprotein reductase] + 2 H2O + H(+). The enzyme catalyses 19-oxo-androst-4-ene-3,17-dione + reduced [NADPH--hemoprotein reductase] + O2 = estrone + formate + oxidized [NADPH--hemoprotein reductase] + H2O + 2 H(+). It carries out the reaction estrone + reduced [NADPH--hemoprotein reductase] + O2 = 2-hydroxyestrone + oxidized [NADPH--hemoprotein reductase] + H2O + H(+). It catalyses the reaction 17beta-hydroxy-5alpha-androstan-3-one + reduced [NADPH--hemoprotein reductase] + O2 = 17beta,19-dihydroxy-3-oxo-5alpha-androstanone + oxidized [NADPH--hemoprotein reductase] + H2O + H(+). The catalysed reaction is 17beta,19-dihydroxy-3-oxo-5alpha-androstanone + reduced [NADPH--hemoprotein reductase] + O2 = 17beta-hydroxy-3,19-dioxo-5alpha-androstanone + oxidized [NADPH--hemoprotein reductase] + 2 H2O + H(+). The enzyme catalyses 17beta-hydroxy-3,19-dioxo-5alpha-androstanone + reduced [NADPH--hemoprotein reductase] + O2 = 17beta-hydroxy-3-oxo-19-nor-5alpha-androst-1-ene + formate + oxidized [NADPH--hemoprotein reductase] + H2O + 2 H(+). It participates in steroid hormone biosynthesis. Its function is as follows. A cytochrome P450 monooxygenase that catalyzes the conversion of C19 androgens, androst-4-ene-3,17-dione (androstenedione) and testosterone to the C18 estrogens, estrone and estradiol, respectively. Catalyzes three successive oxidations of C19 androgens: two conventional oxidations at C19 yielding 19-hydroxy and 19-oxo/19-aldehyde derivatives, followed by a third oxidative aromatization step that involves C1-beta hydrogen abstraction combined with cleavage of the C10-C19 bond to yield a phenolic A ring and formic acid. Alternatively, the third oxidative reaction yields a 19-norsteroid and formic acid. Converts dihydrotestosterone to delta1,10-dehydro 19-nordihydrotestosterone and may play a role in homeostasis of this potent androgen. Also displays 2-hydroxylase activity toward estrone. Mechanistically, uses molecular oxygen inserting one oxygen atom into a substrate, and reducing the second into a water molecule, with two electrons provided by NADPH via cytochrome P450 reductase (CPR; NADPH-ferrihemoprotein reductase). This is Aromatase (CYP19A1) from Bos taurus (Bovine).